Consider the following 291-residue polypeptide: Elongation factor Ts (291 aa).

The interval 79–82 (TDFV) is involved in Mg(2+) ion dislocation from EF-Tu.

It belongs to the EF-Ts family.

Its subcellular location is the cytoplasm. Functionally, associates with the EF-Tu.GDP complex and induces the exchange of GDP to GTP. It remains bound to the aminoacyl-tRNA.EF-Tu.GTP complex up to the GTP hydrolysis stage on the ribosome. The polypeptide is Elongation factor Ts (Jannaschia sp. (strain CCS1)).